The primary structure comprises 32 residues: MSDIN-like toxin proprotein 3 (32 aa).

Residues 1–10 (MSDINATRLP) constitute a propeptide that is removed on maturation. The segment at residues 11-17 (VWIGYSP) is a cross-link (cyclopeptide (Val-Pro)). Positions 18-32 (CVGDDAVALLNRGEG) are excised as a propeptide.

It belongs to the MSDIN fungal toxin family. In terms of processing, processed by the macrocyclase-peptidase enzyme POPB to yield a toxic cyclic heptapeptide. POPB first removes 10 residues from the N-terminus. Conformational trapping of the remaining peptide forces the enzyme to release this intermediate rather than proceed to macrocyclization. The enzyme rebinds the remaining peptide in a different conformation and catalyzes macrocyclization of the N-terminal 7 residues.

Probable toxin that belongs to the MSDIN-like toxin family responsible for a large number of food poisoning cases and deaths. The sequence is that of MSDIN-like toxin proprotein 3 from Amanita fuligineoides.